The following is a 299-amino-acid chain: GTPase Era (299 aa).

Residues 9 to 177 form the Era-type G domain; the sequence is RSGSVAVIGR…VGDLLKLVPE (169 aa). Residues 17–24 form a G1 region; sequence GRPNVGKS. A GTP-binding site is contributed by 17 to 24; the sequence is GRPNVGKS. The segment at 43–47 is G2; it reads QTTRH. Positions 64 to 67 are G3; sequence DTPG. GTP contacts are provided by residues 64–68 and 126–129; these read DTPGL and NKVD. The segment at 126-129 is G4; it reads NKVD. Positions 156 to 158 are G5; that stretch reads VSA. The region spanning 200–284 is the KH type-2 domain; that stretch reads VREQLMRQLG…FLETWVRVRE (85 aa).

This sequence belongs to the TRAFAC class TrmE-Era-EngA-EngB-Septin-like GTPase superfamily. Era GTPase family. As to quaternary structure, monomer.

The protein resides in the cytoplasm. It localises to the cell inner membrane. An essential GTPase that binds both GDP and GTP, with rapid nucleotide exchange. Plays a role in 16S rRNA processing and 30S ribosomal subunit biogenesis and possibly also in cell cycle regulation and energy metabolism. In Xanthomonas axonopodis pv. citri (strain 306), this protein is GTPase Era.